A 299-amino-acid polypeptide reads, in one-letter code: Nitrogenase iron protein (299 aa).

11-18 provides a ligand contact to ATP; sequence GKGGIGKS. C99 lines the [4Fe-4S] cluster pocket. R102 is modified (ADP-ribosylarginine; by dinitrogenase reductase ADP-ribosyltransferase). C133 serves as a coordination point for [4Fe-4S] cluster.

This sequence belongs to the NifH/BchL/ChlL family. As to quaternary structure, homodimer. Requires [4Fe-4S] cluster as cofactor. In terms of processing, the reversible ADP-ribosylation of Arg-102 inactivates the nitrogenase reductase and regulates nitrogenase activity.

The catalysed reaction is N2 + 8 reduced [2Fe-2S]-[ferredoxin] + 16 ATP + 16 H2O = H2 + 8 oxidized [2Fe-2S]-[ferredoxin] + 2 NH4(+) + 16 ADP + 16 phosphate + 6 H(+). In terms of biological role, the key enzymatic reactions in nitrogen fixation are catalyzed by the nitrogenase complex, which has 2 components: the iron protein and the molybdenum-iron protein. This is Nitrogenase iron protein from Methylobacterium nodulans (strain LMG 21967 / CNCM I-2342 / ORS 2060).